The primary structure comprises 325 residues: Hydroxymethylglutaryl-CoA lyase, mitochondrial (325 aa).

The N-terminal 27 residues, 1–27, are a transit peptide targeting the mitochondrion; the sequence is MATVKKVLPRRLVGLATLRAVSTSSVG. Residues 33–300 enclose the Pyruvate carboxyltransferase domain; that stretch reads VKIVEVGPRD…HTGVNLQKLL (268 aa). Arg41 contacts substrate. A divalent metal cation is bound at residue Asp42. Lys48 is modified (N6-acetyllysine; alternate). N6-succinyllysine; alternate is present on Lys48. N6-acetyllysine is present on Lys111. N6-acetyllysine; alternate occurs at positions 137 and 179. N6-succinyllysine; alternate is present on residues Lys137 and Lys179. Residues His233 and His235 each coordinate a divalent metal cation. Cys266 is a catalytic residue. Position 275 (Asn275) interacts with a divalent metal cation. A Microbody targeting signal motif is present at residues 323–325; sequence CKL. Residue Lys324 is modified to N6-acetyllysine.

This sequence belongs to the HMG-CoA lyase family. As to quaternary structure, homodimer; disulfide-linked. Can also form homotetramers.

Its subcellular location is the mitochondrion matrix. The protein localises to the peroxisome. The catalysed reaction is (3S)-3-hydroxy-3-methylglutaryl-CoA = acetoacetate + acetyl-CoA. Its pathway is metabolic intermediate metabolism; (S)-3-hydroxy-3-methylglutaryl-CoA degradation; acetoacetate from (S)-3-hydroxy-3-methylglutaryl-CoA: step 1/1. Its function is as follows. Mitochondrial 3-hydroxy-3-methylglutaryl-CoA lyase that catalyzes a cation-dependent cleavage of (S)-3-hydroxy-3-methylglutaryl-CoA into acetyl-CoA and acetoacetate, a key step in ketogenesis. Terminal step in leucine catabolism. Ketone bodies (beta-hydroxybutyrate, acetoacetate and acetone) are essential as an alternative source of energy to glucose, as lipid precursors and as regulators of metabolism. This is Hydroxymethylglutaryl-CoA lyase, mitochondrial (HMGCL) from Bos taurus (Bovine).